Reading from the N-terminus, the 1377-residue chain is Carboxypeptidase D (1377 aa).

A signal peptide spans 1–37 (MASGRDERPPWRLGRLRLLPPPPLLLLLLLLRSSAQA). Topologically, residues 38–1296 (AHIKKAEATT…DNRIFGLPRE (1259 aa)) are extracellular. One can recognise a Peptidase M14 1 domain in the interval 62–379 (HYYHEAALGE…ESLITLIEKV (318 aa)). 2 residues coordinate Zn(2+): H138 and E141. Residues 161 to 163 (RGD) carry the Cell attachment site motif. N-linked (GlcNAc...) asparagine glycans are attached at residues N171 and N216. A disordered region spans residues 188-231 (RAREGDCGLGDSGPPGTSGRDNSRGRDLNRSFPDQFSTGEPPSL). Residue H256 participates in Zn(2+) binding. Phosphotyrosine is present on Y264. S269 is subject to Phosphoserine. E349 acts as the Proton donor/acceptor in catalysis. 4 N-linked (GlcNAc...) asparagine glycosylation sites follow: N398, N409, N428, and N521. The 291-residue stretch at 501–791 (HHHHFPDMEI…RSLIQFMKQV (291 aa)) folds into the Peptidase M14 2 domain. The Zn(2+) site is built by H563 and E566. The N-linked (GlcNAc...) asparagine glycan is linked to N625. H670 lines the Zn(2+) pocket. E761 (proton donor/acceptor) is an active-site residue. N-linked (GlcNAc...) asparagine glycosylation is found at N810, N854, N866, N878, N952, and N975. The disordered stretch occupies residues 874–898 (ADANNESKKGRGHSTSTDDTSDPTS). The region spanning 929-1208 (RYHSYKDLSE…KSLLSMLVEV (280 aa)) is the Peptidase M14 3 domain. Positions 1038–1047 (RERAQEKDCT) are enriched in basic and acidic residues. Residues 1038-1064 (RERAQEKDCTSKTGHTNAHGKDLDTDF) are disordered. N1067 and N1139 each carry an N-linked (GlcNAc...) asparagine glycan. The helical transmembrane segment at 1297–1317 (LVVTVSGATMSALILTACIIW) threads the bilayer. Residues C1314, C1318, and C1320 are each lipidated (S-palmitoyl cysteine). The Cytoplasmic segment spans residues 1318 to 1377 (CICSIKSNRHKDGFHRLRQHHDEYEDEIRMMSTGSKKSLLSHEFQDETDTEEETLYSSKH). 2 positions are modified to phosphoserine: S1355 and S1358. Residues 1356 to 1377 (LLSHEFQDETDTEEETLYSSKH) form a disordered region. Phosphothreonine occurs at positions 1365 and 1367.

This sequence belongs to the peptidase M14 family. Zn(2+) is required as a cofactor.

It localises to the cell membrane. The catalysed reaction is Releases C-terminal Arg and Lys from polypeptides.. The protein is Carboxypeptidase D (Cpd) of Mus musculus (Mouse).